Here is a 513-residue protein sequence, read N- to C-terminus: ATP synthase subunit alpha (513 aa).

Residue 169–176 coordinates ATP; sequence GDRQTGKT.

The protein belongs to the ATPase alpha/beta chains family. F-type ATPases have 2 components, CF(1) - the catalytic core - and CF(0) - the membrane proton channel. CF(1) has five subunits: alpha(3), beta(3), gamma(1), delta(1), epsilon(1). CF(0) has three main subunits: a(1), b(2) and c(9-12). The alpha and beta chains form an alternating ring which encloses part of the gamma chain. CF(1) is attached to CF(0) by a central stalk formed by the gamma and epsilon chains, while a peripheral stalk is formed by the delta and b chains.

It is found in the cell inner membrane. It catalyses the reaction ATP + H2O + 4 H(+)(in) = ADP + phosphate + 5 H(+)(out). Functionally, produces ATP from ADP in the presence of a proton gradient across the membrane. The alpha chain is a regulatory subunit. The chain is ATP synthase subunit alpha from Proteus mirabilis (strain HI4320).